A 41-amino-acid chain; its full sequence is U3-theraphotoxin-Hs1a (41 aa).

3 cysteine pairs are disulfide-bonded: Cys-2–Cys-16, Cys-9–Cys-37, and Cys-17–Cys-40.

Belongs to the neurotoxin 14 (magi-1) family. 01 (HNTX-16) subfamily. In terms of tissue distribution, expressed by the venom gland.

The protein resides in the secreted. Intracerebroventricular injection paralyzes mice. Has no effect on voltage-gated sodium currents. The chain is U3-theraphotoxin-Hs1a from Cyriopagopus schmidti (Chinese bird spider).